The primary structure comprises 1741 residues: DNA-directed RNA polymerase III subunit RPC1 (1741 aa).

Residues Cys-79, Cys-82, Cys-89, His-92, Cys-119, Cys-122, and Cys-160 each coordinate Zn(2+). Positions 722, 724, and 726 each coordinate Mg(2+). The segment at 1099 to 1111 (PFEFLAHARAGRD) is bridging helix. The disordered stretch occupies residues 1719–1741 (RHANKRSWSRGKERHASLKPKNR).

This sequence belongs to the RNA polymerase beta' chain family. In terms of assembly, component of the RNA polymerase III (Pol III) complex consisting of 17 subunits.

It is found in the nucleus. The catalysed reaction is RNA(n) + a ribonucleoside 5'-triphosphate = RNA(n+1) + diphosphate. Its function is as follows. DNA-dependent RNA polymerase catalyzes the transcription of DNA into RNA using the four ribonucleoside triphosphates as substrates. Largest and catalytic core component of RNA polymerase III which synthesizes small RNAs, such as 5S rRNA and tRNAs. Forms the polymerase active center together with the second largest subunit. A single-stranded DNA template strand of the promoter is positioned within the central active site cleft of Pol III. A bridging helix emanates from RPC1 and crosses the cleft near the catalytic site and is thought to promote translocation of Pol III by acting as a ratchet that moves the RNA-DNA hybrid through the active site by switching from straight to bent conformations at each step of nucleotide addition. The sequence is that of DNA-directed RNA polymerase III subunit RPC1 (RPOA3) from Giardia intestinalis (Giardia lamblia).